We begin with the raw amino-acid sequence, 241 residues long: Fatty acid metabolism regulator protein (241 aa).

The HTH gntR-type domain occupies 6–74; that stretch reads KGPASFAEKY…HGKPTRVNNF (69 aa). A DNA-binding region (H-T-H motif) is located at residues 34-53; it reads ERELSELIGVTRTTLREVLQ.

As to quaternary structure, homodimer.

The protein resides in the cytoplasm. Its function is as follows. Multifunctional regulator of fatty acid metabolism. The protein is Fatty acid metabolism regulator protein of Shewanella sp. (strain ANA-3).